Reading from the N-terminus, the 69-residue chain is uncharacterized protein (69 aa).

2 helical membrane passes run 7–29 (LLSG…LGSI) and 44–66 (ALQV…LGLL).

It localises to the cell membrane. This is an uncharacterized protein from Archaeoglobus fulgidus (strain ATCC 49558 / DSM 4304 / JCM 9628 / NBRC 100126 / VC-16).